The sequence spans 322 residues: MVPSLALVPGEPAGIGPELCVRLAQRPRPDAHLIAYADPDTLHSAAKSLSLSVRLLDPDQPARAPGDLPLHPVRQAVATRFGAPDPANAAAVIAGLRGAADACLTGRLQGIVTGPVHKAVINAGGIPYTGTTELLADHAGCPVVMMLANSIVRVALVTTHLPLRAVADAITADALQQCLRITHAAMQRDFGLEDPRIAVLGLNPHAGEDGLLGREELDIVIPVIEQLRGDGMHLIGPLPADTAFLPQKLGGFDAVVAMYHDQGLPVLKYSGFEQAVNITLGLPYPRVAVDHGTALELAGRRIADPSSLMAATALCARLAARR.

Residue Thr132 coordinates substrate. Residues His160, His205, and His260 each contribute to the a divalent metal cation site. Lys268, Asn277, and Arg286 together coordinate substrate.

This sequence belongs to the PdxA family. In terms of assembly, homodimer. It depends on Zn(2+) as a cofactor. The cofactor is Mg(2+). Co(2+) is required as a cofactor.

It is found in the cytoplasm. The enzyme catalyses 4-(phosphooxy)-L-threonine + NAD(+) = 3-amino-2-oxopropyl phosphate + CO2 + NADH. It functions in the pathway cofactor biosynthesis; pyridoxine 5'-phosphate biosynthesis; pyridoxine 5'-phosphate from D-erythrose 4-phosphate: step 4/5. In terms of biological role, catalyzes the NAD(P)-dependent oxidation of 4-(phosphooxy)-L-threonine (HTP) into 2-amino-3-oxo-4-(phosphooxy)butyric acid which spontaneously decarboxylates to form 3-amino-2-oxopropyl phosphate (AHAP). This Xanthomonas oryzae pv. oryzae (strain PXO99A) protein is 4-hydroxythreonine-4-phosphate dehydrogenase.